We begin with the raw amino-acid sequence, 129 residues long: Large ribosomal subunit protein bL20 (129 aa).

It belongs to the bacterial ribosomal protein bL20 family.

Functionally, binds directly to 23S ribosomal RNA and is necessary for the in vitro assembly process of the 50S ribosomal subunit. It is not involved in the protein synthesizing functions of that subunit. The polypeptide is Large ribosomal subunit protein bL20 (Mycobacterium tuberculosis (strain ATCC 25177 / H37Ra)).